We begin with the raw amino-acid sequence, 520 residues long: GMP synthase [glutamine-hydrolyzing] (520 aa).

One can recognise a Glutamine amidotransferase type-1 domain in the interval 9-202 (KILILDFGSQ…VRAICGCTGH (194 aa)). The Nucleophile role is filled by Cys-86. Residues His-176 and Glu-178 contribute to the active site. The region spanning 203–395 (WTPGQIIEDA…LGLPHQMVWR (193 aa)) is the GMPS ATP-PPase domain. An ATP-binding site is contributed by 230 to 236 (SGGVDSS).

In terms of assembly, homodimer.

The catalysed reaction is XMP + L-glutamine + ATP + H2O = GMP + L-glutamate + AMP + diphosphate + 2 H(+). It functions in the pathway purine metabolism; GMP biosynthesis; GMP from XMP (L-Gln route): step 1/1. Functionally, catalyzes the synthesis of GMP from XMP. The sequence is that of GMP synthase [glutamine-hydrolyzing] from Pelobacter propionicus (strain DSM 2379 / NBRC 103807 / OttBd1).